Consider the following 259-residue polypeptide: Succinate dehydrogenase iron-sulfur subunit (259 aa).

The region spanning 28–119 (RRFNIYRWDP…DVNIYPLPHM (92 aa)) is the 2Fe-2S ferredoxin-type domain. [2Fe-2S] cluster-binding residues include cysteine 80, cysteine 85, and cysteine 100. Residues 160 to 190 (DRKKLDGLYECVMCASCSTACPSYWWNGDRY) enclose the 4Fe-4S ferredoxin-type domain. Residues cysteine 170, cysteine 173, and cysteine 176 each contribute to the [4Fe-4S] cluster site. Cysteine 180 contacts [3Fe-4S] cluster. Tryptophan 185 is an a ubiquinone binding site. Residues cysteine 227 and cysteine 233 each contribute to the [3Fe-4S] cluster site. Cysteine 237 contacts [4Fe-4S] cluster.

Belongs to the succinate dehydrogenase/fumarate reductase iron-sulfur protein family. In terms of assembly, part of an enzyme complex containing four subunits: a flavoprotein, an iron-sulfur, cytochrome b-556, and a hydrophobic anchor protein. Requires [2Fe-2S] cluster as cofactor. [3Fe-4S] cluster serves as cofactor. The cofactor is [4Fe-4S] cluster.

It carries out the reaction a quinone + succinate = fumarate + a quinol. Its pathway is carbohydrate metabolism; tricarboxylic acid cycle; fumarate from succinate (bacterial route): step 1/1. The sequence is that of Succinate dehydrogenase iron-sulfur subunit (sdhB) from Paracoccus denitrificans.